The sequence spans 65 residues: Ovary maturating parsin (65 aa).

A compositionally biased stretch (low complexity) spans 17–28 (PAAPAVAPAAPA). The interval 17-36 (PAAPAVAPAAPASWPHQQRR) is disordered.

Monomer.

Functionally, neurohormone that anticipates ovarian maturation. Acts as a true gonadotropin and stimulates vitellogenin biosynthesis. The protein is Ovary maturating parsin of Locusta migratoria (Migratory locust).